A 365-amino-acid chain; its full sequence is Aminomethyltransferase (365 aa).

The protein belongs to the GcvT family. The glycine cleavage system is composed of four proteins: P, T, L and H.

It catalyses the reaction N(6)-[(R)-S(8)-aminomethyldihydrolipoyl]-L-lysyl-[protein] + (6S)-5,6,7,8-tetrahydrofolate = N(6)-[(R)-dihydrolipoyl]-L-lysyl-[protein] + (6R)-5,10-methylene-5,6,7,8-tetrahydrofolate + NH4(+). The glycine cleavage system catalyzes the degradation of glycine. The protein is Aminomethyltransferase of Desulfitobacterium hafniense (strain DSM 10664 / DCB-2).